The chain runs to 361 residues: Queuine tRNA-ribosyltransferase (361 aa).

The Proton acceptor role is filled by Asp92. Substrate contacts are provided by residues 92 to 96 (DSGGF), Asp146, Gln189, and Gly216. An RNA binding region spans residues 247–253 (GVGKPAD). Catalysis depends on Asp266, which acts as the Nucleophile. Residues 271–275 (TRSGR) are RNA binding; important for wobble base 34 recognition. Zn(2+) is bound by residues Cys304, Cys306, Cys309, and His335.

The protein belongs to the queuine tRNA-ribosyltransferase family. Homodimer. Within each dimer, one monomer is responsible for RNA recognition and catalysis, while the other monomer binds to the replacement base PreQ1. Zn(2+) is required as a cofactor.

The enzyme catalyses 7-aminomethyl-7-carbaguanine + guanosine(34) in tRNA = 7-aminomethyl-7-carbaguanosine(34) in tRNA + guanine. The protein operates within tRNA modification; tRNA-queuosine biosynthesis. Catalyzes the base-exchange of a guanine (G) residue with the queuine precursor 7-aminomethyl-7-deazaguanine (PreQ1) at position 34 (anticodon wobble position) in tRNAs with GU(N) anticodons (tRNA-Asp, -Asn, -His and -Tyr). Catalysis occurs through a double-displacement mechanism. The nucleophile active site attacks the C1' of nucleotide 34 to detach the guanine base from the RNA, forming a covalent enzyme-RNA intermediate. The proton acceptor active site deprotonates the incoming PreQ1, allowing a nucleophilic attack on the C1' of the ribose to form the product. After dissociation, two additional enzymatic reactions on the tRNA convert PreQ1 to queuine (Q), resulting in the hypermodified nucleoside queuosine (7-(((4,5-cis-dihydroxy-2-cyclopenten-1-yl)amino)methyl)-7-deazaguanosine). This is Queuine tRNA-ribosyltransferase from Rickettsia peacockii (strain Rustic).